The following is a 415-amino-acid chain: Serine--tRNA ligase (415 aa).

231-233 is a binding site for L-serine; that stretch reads TAE. An ATP-binding site is contributed by 262 to 264; it reads RSE. E285 lines the L-serine pocket. 349–352 contacts ATP; it reads EISS. S383 is a binding site for L-serine.

It belongs to the class-II aminoacyl-tRNA synthetase family. Type-1 seryl-tRNA synthetase subfamily. As to quaternary structure, homodimer. The tRNA molecule binds across the dimer.

It is found in the cytoplasm. The enzyme catalyses tRNA(Ser) + L-serine + ATP = L-seryl-tRNA(Ser) + AMP + diphosphate + H(+). The catalysed reaction is tRNA(Sec) + L-serine + ATP = L-seryl-tRNA(Sec) + AMP + diphosphate + H(+). It functions in the pathway aminoacyl-tRNA biosynthesis; selenocysteinyl-tRNA(Sec) biosynthesis; L-seryl-tRNA(Sec) from L-serine and tRNA(Sec): step 1/1. Catalyzes the attachment of serine to tRNA(Ser). Is also able to aminoacylate tRNA(Sec) with serine, to form the misacylated tRNA L-seryl-tRNA(Sec), which will be further converted into selenocysteinyl-tRNA(Sec). This Helicobacter pylori (strain Shi470) protein is Serine--tRNA ligase.